Here is a 279-residue protein sequence, read N- to C-terminus: Probable endonuclease 4 (279 aa).

Zn(2+) contacts are provided by H69, H109, E145, D179, H182, H216, D229, H231, and E261.

This sequence belongs to the AP endonuclease 2 family. The cofactor is Zn(2+).

The catalysed reaction is Endonucleolytic cleavage to 5'-phosphooligonucleotide end-products.. Endonuclease IV plays a role in DNA repair. It cleaves phosphodiester bonds at apurinic or apyrimidinic (AP) sites, generating a 3'-hydroxyl group and a 5'-terminal sugar phosphate. The polypeptide is Probable endonuclease 4 (Chlorobium phaeovibrioides (strain DSM 265 / 1930) (Prosthecochloris vibrioformis (strain DSM 265))).